The following is a 191-amino-acid chain: Large ribosomal subunit protein bL9 (191 aa).

The disordered stretch occupies residues Glu-150 to Glu-191. Acidic residues predominate over residues Phe-179 to Glu-191.

It belongs to the bacterial ribosomal protein bL9 family.

In terms of biological role, binds to the 23S rRNA. The chain is Large ribosomal subunit protein bL9 from Allorhizobium ampelinum (strain ATCC BAA-846 / DSM 112012 / S4) (Agrobacterium vitis (strain S4)).